Consider the following 220-residue polypeptide: Deoxyribose-phosphate aldolase 1 (220 aa).

D89 (proton donor/acceptor) is an active-site residue. Catalysis depends on K151, which acts as the Schiff-base intermediate with acetaldehyde. K180 functions as the Proton donor/acceptor in the catalytic mechanism.

It belongs to the DeoC/FbaB aldolase family. DeoC type 1 subfamily.

It is found in the cytoplasm. The enzyme catalyses 2-deoxy-D-ribose 5-phosphate = D-glyceraldehyde 3-phosphate + acetaldehyde. It participates in carbohydrate degradation; 2-deoxy-D-ribose 1-phosphate degradation; D-glyceraldehyde 3-phosphate and acetaldehyde from 2-deoxy-alpha-D-ribose 1-phosphate: step 2/2. Its function is as follows. Catalyzes a reversible aldol reaction between acetaldehyde and D-glyceraldehyde 3-phosphate to generate 2-deoxy-D-ribose 5-phosphate. This Staphylococcus aureus (strain COL) protein is Deoxyribose-phosphate aldolase 1.